Consider the following 506-residue polypeptide: Maturase K (506 aa).

The protein belongs to the intron maturase 2 family. MatK subfamily.

The protein localises to the plastid. The protein resides in the chloroplast. Functionally, usually encoded in the trnK tRNA gene intron. Probably assists in splicing its own and other chloroplast group II introns. This is Maturase K from Erica tetralix (Cross-leaved heath).